The chain runs to 306 residues: Aspartate carbamoyltransferase catalytic subunit (306 aa).

2 residues coordinate carbamoyl phosphate: R55 and T56. Residue K85 coordinates L-aspartate. Carbamoyl phosphate contacts are provided by R106, H133, and Q136. The L-aspartate site is built by R166 and R228. 2 residues coordinate carbamoyl phosphate: L264 and P265.

Belongs to the aspartate/ornithine carbamoyltransferase superfamily. ATCase family. As to quaternary structure, heterododecamer (2C3:3R2) of six catalytic PyrB chains organized as two trimers (C3), and six regulatory PyrI chains organized as three dimers (R2).

The catalysed reaction is carbamoyl phosphate + L-aspartate = N-carbamoyl-L-aspartate + phosphate + H(+). It functions in the pathway pyrimidine metabolism; UMP biosynthesis via de novo pathway; (S)-dihydroorotate from bicarbonate: step 2/3. Catalyzes the condensation of carbamoyl phosphate and aspartate to form carbamoyl aspartate and inorganic phosphate, the committed step in the de novo pyrimidine nucleotide biosynthesis pathway. In Serratia marcescens, this protein is Aspartate carbamoyltransferase catalytic subunit.